The primary structure comprises 255 residues: 5-oxoprolinase subunit A (255 aa).

It belongs to the LamB/PxpA family. As to quaternary structure, forms a complex composed of PxpA, PxpB and PxpC.

The catalysed reaction is 5-oxo-L-proline + ATP + 2 H2O = L-glutamate + ADP + phosphate + H(+). Catalyzes the cleavage of 5-oxoproline to form L-glutamate coupled to the hydrolysis of ATP to ADP and inorganic phosphate. The protein is 5-oxoprolinase subunit A of Thermococcus sibiricus (strain DSM 12597 / MM 739).